Here is a 369-residue protein sequence, read N- to C-terminus: F-box protein At3g08750 (369 aa).

The 48-residue stretch at 6-53 (CLLLPSLPFELIEEILYKIPAESLIRFKSTCKKWYNLITEKRFMYNHL) folds into the F-box domain.

This chain is F-box protein At3g08750, found in Arabidopsis thaliana (Mouse-ear cress).